Reading from the N-terminus, the 353-residue chain is MAIDENKQKALAAALGQIEKQFGKGSIMRLGEDRSMDVETISTGSLSLDIALGAGGLPMGRIVEIYGPESSGKTTLTLQVIAAAQLEGKTCAFIDAEHALDPIYARKLGVDIDNLLCSQPDTGEQALEICDALARSGAVDVIVVDSVAALTPKAEIEGEIGDSHMGLAARMMSQAMRKLAGNLKQSNTLLIFINQIRMKIGVMFGNPETTTGGNALKFYASVRLDIRRIGAVKEGENVVGSETRVKVVKNKIAAPFKQAEFQILYGEGINFYGELVDLGVKEKLIEKAGAWYSYKGEKIGQGKANATAWLKDNPETAKEIEKKVRELLLSNPNSTPDFSVDDSEGVAETNEDF.

Residue glycine 67–threonine 74 participates in ATP binding. The disordered stretch occupies residues serine 330–phenylalanine 353. Positions serine 339–phenylalanine 353 are enriched in acidic residues.

This sequence belongs to the RecA family.

The protein localises to the cytoplasm. Can catalyze the hydrolysis of ATP in the presence of single-stranded DNA, the ATP-dependent uptake of single-stranded DNA by duplex DNA, and the ATP-dependent hybridization of homologous single-stranded DNAs. It interacts with LexA causing its activation and leading to its autocatalytic cleavage. This Shigella sonnei protein is Protein RecA.